A 253-amino-acid chain; its full sequence is Tryptophan synthase alpha chain (253 aa).

Catalysis depends on proton acceptor residues Glu47 and Asp58.

This sequence belongs to the TrpA family. Tetramer of two alpha and two beta chains.

The enzyme catalyses (1S,2R)-1-C-(indol-3-yl)glycerol 3-phosphate + L-serine = D-glyceraldehyde 3-phosphate + L-tryptophan + H2O. Its pathway is amino-acid biosynthesis; L-tryptophan biosynthesis; L-tryptophan from chorismate: step 5/5. Its function is as follows. The alpha subunit is responsible for the aldol cleavage of indoleglycerol phosphate to indole and glyceraldehyde 3-phosphate. This chain is Tryptophan synthase alpha chain, found in Syntrophotalea carbinolica (strain DSM 2380 / NBRC 103641 / GraBd1) (Pelobacter carbinolicus).